We begin with the raw amino-acid sequence, 319 residues long: Aspartate carbamoyltransferase catalytic subunit (319 aa).

The carbamoyl phosphate site is built by Arg-55 and Thr-56. Residue Lys-83 coordinates L-aspartate. Carbamoyl phosphate-binding residues include Arg-105, His-144, and Gln-147. Residues Arg-177 and Arg-231 each contribute to the L-aspartate site. The carbamoyl phosphate site is built by Gly-272 and Pro-273.

Belongs to the aspartate/ornithine carbamoyltransferase superfamily. ATCase family. As to quaternary structure, heterododecamer (2C3:3R2) of six catalytic PyrB chains organized as two trimers (C3), and six regulatory PyrI chains organized as three dimers (R2).

It catalyses the reaction carbamoyl phosphate + L-aspartate = N-carbamoyl-L-aspartate + phosphate + H(+). It participates in pyrimidine metabolism; UMP biosynthesis via de novo pathway; (S)-dihydroorotate from bicarbonate: step 2/3. In terms of biological role, catalyzes the condensation of carbamoyl phosphate and aspartate to form carbamoyl aspartate and inorganic phosphate, the committed step in the de novo pyrimidine nucleotide biosynthesis pathway. In Nocardia farcinica (strain IFM 10152), this protein is Aspartate carbamoyltransferase catalytic subunit.